A 308-amino-acid polypeptide reads, in one-letter code: D-alanine--D-alanine ligase (308 aa).

The 201-residue stretch at 102–302 (KHVAKAAGIP…FGEFLRWMVE (201 aa)) folds into the ATP-grasp domain. Position 128-183 (128-183 (PMKPPYVVKPVREGSSFGVVIVKEDQSHPPQVITSSDWRYGDRIMVERYVAGREFT)) interacts with ATP. Residues aspartate 252, glutamate 269, and asparagine 271 each contribute to the Mg(2+) site.

The protein belongs to the D-alanine--D-alanine ligase family. Mg(2+) is required as a cofactor. Mn(2+) serves as cofactor.

Its subcellular location is the cytoplasm. The enzyme catalyses 2 D-alanine + ATP = D-alanyl-D-alanine + ADP + phosphate + H(+). Its pathway is cell wall biogenesis; peptidoglycan biosynthesis. Functionally, cell wall formation. In Sinorhizobium medicae (strain WSM419) (Ensifer medicae), this protein is D-alanine--D-alanine ligase.